The following is a 337-amino-acid chain: Cytoskeleton protein RodZ (337 aa).

Over 1–111 the chain is Cytoplasmic; sequence MNTEATHDQN…LGKRRKKRDG (111 aa). The HTH cro/C1-type domain occupies 19–71; sequence LRNAREQLGLSQQAVAERLCLKVSTVRDIEEDKAPADLASTFLRGYIRSYARL. Positions 30–49 form a DNA-binding region, H-T-H motif; the sequence is QQAVAERLCLKVSTVRDIEE. The helical; Signal-anchor for type II membrane protein transmembrane segment at 112–132 threads the bilayer; that stretch reads WLMTFTWLVLFVVIGLSGAWW. Residues 133–337 lie on the Periplasmic side of the membrane; that stretch reads WQDHKAQQEE…TLNAEQSPAQ (205 aa). The segment covering 145–167 has biased composition (polar residues); that stretch reads TMADQSSAELSSNSEQGQSVPLN. A disordered region spans residues 145 to 220; sequence TMADQSSAEL…VSPSQANVDT (76 aa). The segment covering 168–207 has biased composition (low complexity); sequence TSTTTDPATTSTPPASVDTTATNTQTPAVTAPAPAVDPQQ. Positions 208-218 are enriched in polar residues; sequence NAVVSPSQANV.

The protein belongs to the RodZ family.

It is found in the cell inner membrane. Functionally, cytoskeletal protein that is involved in cell-shape control through regulation of the length of the long axis. The chain is Cytoskeleton protein RodZ from Escherichia coli O17:K52:H18 (strain UMN026 / ExPEC).